Here is a 114-residue protein sequence, read N- to C-terminus: UPF0757 protein YmgG (114 aa).

Belongs to the UPF0757 family.

The chain is UPF0757 protein YmgG from Edwardsiella ictaluri (strain 93-146).